Here is a 196-residue protein sequence, read N- to C-terminus: Holliday junction branch migration complex subunit RuvA (196 aa).

The domain I stretch occupies residues 1–63 (MYDYIKGKLS…DDAHLLFGFH (63 aa)). A domain II region spans residues 64–142 (TENEKEIFLN…EASGESATSR (79 aa)). The segment at 143 to 148 (KVSSEQ) is flexible linker. A domain III region spans residues 148 to 196 (QNSNLEEAMEALLALGYKATELKKVKAFFEGTNETVEQYIKSSLKMLMK).

This sequence belongs to the RuvA family. Homotetramer. Forms an RuvA(8)-RuvB(12)-Holliday junction (HJ) complex. HJ DNA is sandwiched between 2 RuvA tetramers; dsDNA enters through RuvA and exits via RuvB. An RuvB hexamer assembles on each DNA strand where it exits the tetramer. Each RuvB hexamer is contacted by two RuvA subunits (via domain III) on 2 adjacent RuvB subunits; this complex drives branch migration. In the full resolvosome a probable DNA-RuvA(4)-RuvB(12)-RuvC(2) complex forms which resolves the HJ.

It is found in the cytoplasm. In terms of biological role, the RuvA-RuvB-RuvC complex processes Holliday junction (HJ) DNA during genetic recombination and DNA repair, while the RuvA-RuvB complex plays an important role in the rescue of blocked DNA replication forks via replication fork reversal (RFR). RuvA specifically binds to HJ cruciform DNA, conferring on it an open structure. The RuvB hexamer acts as an ATP-dependent pump, pulling dsDNA into and through the RuvAB complex. HJ branch migration allows RuvC to scan DNA until it finds its consensus sequence, where it cleaves and resolves the cruciform DNA. The sequence is that of Holliday junction branch migration complex subunit RuvA from Streptococcus agalactiae serotype Ia (strain ATCC 27591 / A909 / CDC SS700).